An 85-amino-acid chain; its full sequence is RNA-binding protein KhpA (85 aa).

The KH domain maps to tyrosine 32–serine 85.

This sequence belongs to the KhpA RNA-binding protein family. Forms a complex with KhpB.

It localises to the cytoplasm. In terms of biological role, a probable RNA chaperone. Forms a complex with KhpB which binds to cellular RNA and controls its expression. Plays a role in peptidoglycan (PG) homeostasis and cell length regulation. Its function is as follows. Necessary for correct cell elongation. The protein is RNA-binding protein KhpA of Lactiplantibacillus plantarum (strain ATCC BAA-793 / NCIMB 8826 / WCFS1) (Lactobacillus plantarum).